A 337-amino-acid polypeptide reads, in one-letter code: Eukaryotic translation initiation factor 3 subunit H (337 aa).

Residues 21 to 153 (VQCDGLAVMK…LKAYRLTPQA (133 aa)) form the MPN domain.

This sequence belongs to the eIF-3 subunit H family. In terms of assembly, component of the eukaryotic translation initiation factor 3 (eIF-3) complex.

The protein localises to the cytoplasm. Functionally, component of the eukaryotic translation initiation factor 3 (eIF-3) complex, which is involved in protein synthesis of a specialized repertoire of mRNAs and, together with other initiation factors, stimulates binding of mRNA and methionyl-tRNAi to the 40S ribosome. The eIF-3 complex specifically targets and initiates translation of a subset of mRNAs involved in cell proliferation. This Bombyx mori (Silk moth) protein is Eukaryotic translation initiation factor 3 subunit H.